The primary structure comprises 699 residues: D-(-)-3-hydroxybutyrate oligomer hydrolase (699 aa).

The first 33 residues, 1-33 (MTAIRGGSRRAPGLALALLGGVLLGACHGDENA), serve as a signal peptide directing secretion. The active-site Charge relay system is S311.

It belongs to the D-(-)-3-hydroxybutyrate oligomer hydrolase family.

It is found in the secreted. The catalysed reaction is (3R)-hydroxybutanoate dimer + H2O = 2 (R)-3-hydroxybutanoate + H(+). It participates in lipid metabolism; butanoate metabolism. Its function is as follows. Participates in the degradation of poly-3-hydroxybutyrate (PHB). It works downstream of poly(3-hydroxybutyrate) depolymerase, hydrolyzing D(-)-3-hydroxybutyrate oligomers of various length (3HB-oligomers) into 3HB-monomers. The protein is D-(-)-3-hydroxybutyrate oligomer hydrolase of Burkholderia pseudomallei (strain 1106a).